The sequence spans 512 residues: 2,3-bisphosphoglycerate-independent phosphoglycerate mutase (512 aa).

D12 and S62 together coordinate Mn(2+). S62 functions as the Phosphoserine intermediate in the catalytic mechanism. Residues H123, 153–154 (RD), R185, R191, 260–263 (RPDR), and K333 each bind substrate. Mn(2+) contacts are provided by D400, H404, D441, H442, and H460.

Belongs to the BPG-independent phosphoglycerate mutase family. Monomer. It depends on Mn(2+) as a cofactor.

It catalyses the reaction (2R)-2-phosphoglycerate = (2R)-3-phosphoglycerate. The protein operates within carbohydrate degradation; glycolysis; pyruvate from D-glyceraldehyde 3-phosphate: step 3/5. Functionally, catalyzes the interconversion of 2-phosphoglycerate and 3-phosphoglycerate. This is 2,3-bisphosphoglycerate-independent phosphoglycerate mutase from Clostridium perfringens (strain SM101 / Type A).